Reading from the N-terminus, the 3179-residue chain is Guanylate cyclase beta (3179 aa).

At methionine 1–leucine 60 the chain is on the cytoplasmic side. A helical membrane pass occupies residues isoleucine 61–isoleucine 81. Residues asparagine 82–lysine 88 are Extracellular-facing. The chain crosses the membrane as a helical span at residues tyrosine 89 to glutamate 109. The Cytoplasmic segment spans residues serine 110 to tyrosine 295. A helical transmembrane segment spans residues tyrosine 296 to phenylalanine 316. The Extracellular segment spans residues histidine 317–serine 328. Residues phenylalanine 329 to tyrosine 349 form a helical membrane-spanning segment. The Cytoplasmic segment spans residues serine 350–lysine 988. Residues valine 989–phenylalanine 1009 form a helical membrane-spanning segment. Topologically, residues aspartate 1010 to serine 1020 are extracellular. The chain crosses the membrane as a helical span at residues isoleucine 1021–alanine 1041. Topologically, residues tyrosine 1042–asparagine 1069 are cytoplasmic. A helical transmembrane segment spans residues asparagine 1070–leucine 1090. Residues arginine 1091 to glutamate 1102 lie on the Extracellular side of the membrane. The chain crosses the membrane as a helical span at residues phenylalanine 1103–serine 1123. Residues lysine 1124 to histidine 1127 are Cytoplasmic-facing. Residues isoleucine 1128 to phenylalanine 1148 form a helical membrane-spanning segment. Residues threonine 1149–asparagine 1168 lie on the Extracellular side of the membrane. A helical transmembrane segment spans residues isoleucine 1169 to methionine 1189. Over lysine 1190–arginine 1304 the chain is Cytoplasmic. A helical transmembrane segment spans residues isoleucine 1305 to aspartate 1325. The Extracellular portion of the chain corresponds to isoleucine 1326–asparagine 1331. The helical transmembrane segment at isoleucine 1332–tyrosine 1352 threads the bilayer. Topologically, residues isoleucine 1353–threonine 1360 are cytoplasmic. Residues serine 1361–tyrosine 1381 form a helical membrane-spanning segment. At aspartate 1382–tyrosine 1401 the chain is on the extracellular side. Residue asparagine 1383 is glycosylated (N-linked (GlcNAc...) asparagine). The chain crosses the membrane as a helical span at residues isoleucine 1402–leucine 1422. Residues threonine 1423–glutamine 1464 are Cytoplasmic-facing. Residues isoleucine 1465–tyrosine 1485 traverse the membrane as a helical segment. The Extracellular segment spans residues glutamate 1486–glutamine 1507. A helical transmembrane segment spans residues isoleucine 1508 to proline 1528. Topologically, residues lysine 1529 to leucine 2739 are cytoplasmic. The Guanylate cyclase 1 domain occupies serine 1548 to lysine 1700. Disordered stretches follow at residues leucine 2123–serine 2153, serine 2355–lysine 2379, and lysine 2576–serine 2656. Basic residues predominate over residues asparagine 2131–valine 2142. Residues asparagine 2584 to isoleucine 2607 are compositionally biased toward low complexity. The span at histidine 2614–histidine 2645 shows a compositional bias: basic residues. Residues isoleucine 2740–phenylalanine 2760 form a helical membrane-spanning segment. Topologically, residues tyrosine 2761–serine 2770 are extracellular. N-linked (GlcNAc...) asparagine glycosylation is present at asparagine 2768. Residues isoleucine 2771 to isoleucine 2791 form a helical membrane-spanning segment. Residues leucine 2792 to threonine 2809 lie on the Cytoplasmic side of the membrane. The helical transmembrane segment at isoleucine 2810 to isoleucine 2830 threads the bilayer. Topologically, residues histidine 2831–arginine 2842 are extracellular. Residues alanine 2843–lysine 2863 form a helical membrane-spanning segment. Over asparagine 2864–lysine 2870 the chain is Cytoplasmic. The chain crosses the membrane as a helical span at residues phenylalanine 2871–isoleucine 2891. Residues histidine 2892–glutamine 2895 lie on the Extracellular side of the membrane. Residues threonine 2896–serine 2916 traverse the membrane as a helical segment. Over glutamate 2917–serine 3179 the chain is Cytoplasmic. Positions alanine 2968–glutamate 3102 constitute a Guanylate cyclase 2 domain. 3 residues coordinate Mg(2+): aspartate 2973, isoleucine 2974, and aspartate 3017.

It in the N-terminal section; belongs to the cation transport ATPase (P-type) (TC 3.A.3) family. Type IV subfamily. This sequence in the C-terminal section; belongs to the adenylyl cyclase class-4/guanylyl cyclase family. The cofactor is Mg(2+). Mn(2+) is required as a cofactor.

Its subcellular location is the membrane. It catalyses the reaction GTP = 3',5'-cyclic GMP + diphosphate. With respect to regulation, basal guanylate activity of the recombinant guanylate cyclase domains 1 and 2 is not modulated by an increase in Ca(2+) levels or by the gametogenesis inducer xanthurenic acid. Catalyzes the synthesis of the second messenger cGMP from GTP. Regulates cGMP production in gametocytes; however, is dispensable for the initiation of gametogenesis. Does not have adenylate cyclase activity. This Plasmodium falciparum (isolate 3D7) protein is Guanylate cyclase beta.